A 534-amino-acid polypeptide reads, in one-letter code: C-22 sterol desaturase ERG5B (534 aa).

Residues 43–61 (IAVTIFAVLIAYDQFMYIW) form a helical membrane-spanning segment. Residue cysteine 480 participates in heme binding.

The protein belongs to the cytochrome P450 family. Heme serves as cofactor.

It is found in the endoplasmic reticulum membrane. It carries out the reaction 5-dehydroepisterol + NADPH + O2 + H(+) = ergosta-5,7,22,24(28)-tetraen-3beta-ol + NADP(+) + 2 H2O. The protein operates within steroid metabolism; ergosterol biosynthesis. In terms of biological role, C-22 sterol desaturase; part of the third module of ergosterol biosynthesis pathway that includes the late steps of the pathway. ERG5A and ERG5B convert 5-dehydroepisterol into ergosta-5,7,22,24(28)-tetraen-3beta-ol by forming the C-22(23) double bond in the sterol side chain. The third module or late pathway involves the ergosterol synthesis itself through consecutive reactions that mainly occur in the endoplasmic reticulum (ER) membrane. Firstly, the squalene synthase ERG9 catalyzes the condensation of 2 farnesyl pyrophosphate moieties to form squalene, which is the precursor of all steroids. Squalene synthase is crucial for balancing the incorporation of farnesyl diphosphate (FPP) into sterol and nonsterol isoprene synthesis. Secondly, squalene is converted into lanosterol by the consecutive action of the squalene epoxidase ERG1 and the lanosterol synthase ERG7. Then, the delta(24)-sterol C-methyltransferase ERG6 methylates lanosterol at C-24 to produce eburicol. Eburicol is the substrate of the sterol 14-alpha demethylase encoded by CYP51A, CYP51B and CYP51C, to yield 4,4,24-trimethyl ergosta-8,14,24(28)-trienol. CYP51B encodes the enzyme primarily responsible for sterol 14-alpha-demethylation, and plays an essential role in ascospore formation. CYP51A encodes an additional sterol 14-alpha-demethylase, induced on ergosterol depletion and responsible for the intrinsic variation in azole sensitivity. The third CYP51 isoform, CYP51C, does not encode a sterol 14-alpha-demethylase, but is required for full virulence on host wheat ears. The C-14 reductase ERG24 then reduces the C14=C15 double bond which leads to 4,4-dimethylfecosterol. A sequence of further demethylations at C-4, involving the C-4 demethylation complex containing the C-4 methylsterol oxidases ERG25, the sterol-4-alpha-carboxylate 3-dehydrogenase ERG26 and the 3-keto-steroid reductase ERG27, leads to the production of fecosterol via 4-methylfecosterol. ERG28 has a role as a scaffold to help anchor ERG25, ERG26 and ERG27 to the endoplasmic reticulum. The C-8 sterol isomerase ERG2 then catalyzes the reaction which results in unsaturation at C-7 in the B ring of sterols and thus converts fecosterol to episterol. The sterol-C5-desaturases ERG3A and ERG3BB then catalyze the introduction of a C-5 double bond in the B ring to produce 5-dehydroepisterol. The C-22 sterol desaturases ERG5A and ERG5B further convert 5-dehydroepisterol into ergosta-5,7,22,24(28)-tetraen-3beta-ol by forming the C-22(23) double bond in the sterol side chain. Finally, ergosta-5,7,22,24(28)-tetraen-3beta-ol is substrate of the C-24(28) sterol reductase ERG4 to produce ergosterol. The chain is C-22 sterol desaturase ERG5B from Gibberella zeae (strain ATCC MYA-4620 / CBS 123657 / FGSC 9075 / NRRL 31084 / PH-1) (Wheat head blight fungus).